The chain runs to 314 residues: Lysophospholipase D GDPD1 (314 aa).

Residues 1–3 lie on the Extracellular side of the membrane; the sequence is MSS. A helical membrane pass occupies residues 4 to 24; sequence TAAFCLLSTLGGYLVTSFLLL. At 25-195 the chain is on the cytoplasmic side; it reads KYPALLHQRK…VDKCYKENSD (171 aa). The GP-PDE domain occupies 40 to 309; the sequence is SRHISHRGGA…DYPTKLKEFL (270 aa). A divalent metal cation-binding residues include Glu72, Asp74, and His87. The helical transmembrane segment at 196–216 threads the bilayer; it reads IPILFSLQRVLLILGLFFTGL. Residues 217-314 lie on the Extracellular side of the membrane; the sequence is LPFVPIREQF…LKEFLNNMSA (98 aa).

Belongs to the glycerophosphoryl diester phosphodiesterase family.

The protein localises to the cytoplasm. The protein resides in the membrane. Its subcellular location is the perinuclear region. It is found in the endoplasmic reticulum. It carries out the reaction a 1-O-alkyl-sn-glycero-3-phosphocholine + H2O = a 1-O-alkyl-sn-glycero-3-phosphate + choline + H(+). The enzyme catalyses 1-hexadecanoyl-sn-glycero-3-phosphocholine + H2O = 1-hexadecanoyl-sn-glycero-3-phosphate + choline + H(+). It catalyses the reaction 1-hexadecanoyl-sn-glycero-3-phosphoethanolamine + H2O = 1-hexadecanoyl-sn-glycero-3-phosphate + ethanolamine + H(+). The catalysed reaction is N-hexadecanoyl-sn-glycero-3-phosphoethanolamine + H2O = N-hexadecanoylethanolamine + sn-glycerol 3-phosphate + H(+). It carries out the reaction N-(5Z,8Z,11Z,14Z-eicosatetraenoyl)-1-(9Z-octadecenoyl)-sn-glycero-3-phosphoethanolamine + H2O = N-(5Z,8Z,11Z,14Z-eicosatetraenoyl)-ethanolamine + 1-(9Z-octadecenoyl)-sn-glycero-3-phosphate + H(+). The enzyme catalyses N,1-di-(9Z-octadecenoyl)-sn-glycero-3-phosphoethanolamine + H2O = N-(9Z-octadecenoyl) ethanolamine + 1-(9Z-octadecenoyl)-sn-glycero-3-phosphate + H(+). It catalyses the reaction N-hexadecanoyl-1-(9Z-octadecenoyl)-sn-glycero-3-phosphoethanolamine + H2O = N-hexadecanoylethanolamine + 1-(9Z-octadecenoyl)-sn-glycero-3-phosphate + H(+). The catalysed reaction is 1-O-hexadecyl-sn-glycero-3-phosphocholine + H2O = 1-O-hexadecyl-sn-glycero-3-phosphate + choline + H(+). It carries out the reaction 1-(9Z-octadecenoyl)-sn-glycero-3-phosphocholine + H2O = 1-(9Z-octadecenoyl)-sn-glycero-3-phosphate + choline + H(+). The enzyme catalyses N,1-dihexadecanoyl-sn-glycero-3-phosphoethanolamine + H2O = N-hexadecanoylethanolamine + 1-hexadecanoyl-sn-glycero-3-phosphate + H(+). It catalyses the reaction 1-O-(1Z-octadecenyl)-sn-glycero-3-phospho-(N-5Z,8Z,11Z,14Z-eicosatetraenoyl)-ethanolamine + H2O = 1-O-(1Z-octadecenyl)-sn-glycero-3-phosphate + N-(5Z,8Z,11Z,14Z-eicosatetraenoyl)-ethanolamine + H(+). The catalysed reaction is 1-O-(1Z-octadecenyl)-sn-glycero-3-phospho-(N-9Z-octadecenoyl)-ethanolamine + H2O = 1-O-(1Z-octadecenyl)-sn-glycero-3-phosphate + N-(9Z-octadecenoyl) ethanolamine + H(+). It carries out the reaction 1-O-(1Z-octadecenyl)-sn-glycero-3-phospho-N-hexadecanoyl-ethanolamine + H2O = 1-O-(1Z-octadecenyl)-sn-glycero-3-phosphate + N-hexadecanoylethanolamine + H(+). Lysophospholipase D activity is increased by magnesium and manganese and inhibited by calcium in a concentration dependent manner. Loss of lysophospholipase D activity by addition of EDTA. Its function is as follows. Hydrolyzes lysoglycerophospholipids to produce lysophosphatidic acid (LPA) and the corresponding amines. Shows a preference for 1-O-alkyl-sn-glycero-3-phosphocholine (lyso-PAF), lysophosphatidylethanolamine (lyso-PE) and lysophosphatidylcholine (lyso-PC). May be involved in bioactive N-acylethanolamine biosynthesis from both N-acyl-lysoplasmenylethanolamin (N-acyl-lysoPlsEt) and N-acyl-lysophosphatidylethanolamin (N-acyl-lysoPE). In addition, hydrolyzes glycerophospho-N-acylethanolamine to N-acylethanolamine. Does not display glycerophosphodiester phosphodiesterase activity, since it cannot hydrolyze either glycerophosphoinositol or glycerophosphocholine. In Rattus norvegicus (Rat), this protein is Lysophospholipase D GDPD1.